A 556-amino-acid chain; its full sequence is M-phase inducer phosphatase (556 aa).

2 disordered regions span residues 165–186 and 257–297; these read STDG…QERR and TSGL…RPRK. A compositionally biased stretch (basic residues) spans 287 to 297; it reads KSAHPNMRPRK. Residues 371–474 enclose the Rhodanese domain; it reads MFDNIMIIDC…FFAEHRSLCY (104 aa). C421 is a catalytic residue. Over residues 505 to 516 the composition is skewed to polar residues; it reads RAQTFAFGQQSP. A disordered region spans residues 505–556; that stretch reads RAQTFAFGQQSPEMEDSPTGRCRNNPGDRKLLASPFNDSPGSRFPGRRMLSY.

The protein belongs to the MPI phosphatase family.

It carries out the reaction O-phospho-L-tyrosyl-[protein] + H2O = L-tyrosyl-[protein] + phosphate. Functionally, this protein functions as a dosage-dependent inducer in mitotic control. It is a tyrosine protein phosphatase required for progression of the cell cycle. It may directly dephosphorylate p34(cdc2) and activate the p34(cdc2) kinase activity. The chain is M-phase inducer phosphatase (nimT) from Emericella nidulans (strain FGSC A4 / ATCC 38163 / CBS 112.46 / NRRL 194 / M139) (Aspergillus nidulans).